Reading from the N-terminus, the 390-residue chain is 1-deoxy-D-xylulose 5-phosphate reductoisomerase (390 aa).

NADPH is bound by residues T10, G11, S12, I13, G36, R37, N38, and N121. Position 122 (K122) interacts with 1-deoxy-D-xylulose 5-phosphate. E123 contacts NADPH. D147 serves as a coordination point for Mn(2+). Residues S148, E149, S173, and H196 each contribute to the 1-deoxy-D-xylulose 5-phosphate site. E149 serves as a coordination point for Mn(2+). G202 contacts NADPH. Positions 209, 214, 215, and 218 each coordinate 1-deoxy-D-xylulose 5-phosphate. Residue E218 coordinates Mn(2+). Positions 367–390 (AASEHGRREAEKRVGARAHAPASR) are disordered. The segment covering 370–380 (EHGRREAEKRV) has biased composition (basic and acidic residues).

The protein belongs to the DXR family. Requires Mg(2+) as cofactor. It depends on Mn(2+) as a cofactor.

The catalysed reaction is 2-C-methyl-D-erythritol 4-phosphate + NADP(+) = 1-deoxy-D-xylulose 5-phosphate + NADPH + H(+). Its pathway is isoprenoid biosynthesis; isopentenyl diphosphate biosynthesis via DXP pathway; isopentenyl diphosphate from 1-deoxy-D-xylulose 5-phosphate: step 1/6. Its function is as follows. Catalyzes the NADPH-dependent rearrangement and reduction of 1-deoxy-D-xylulose-5-phosphate (DXP) to 2-C-methyl-D-erythritol 4-phosphate (MEP). The polypeptide is 1-deoxy-D-xylulose 5-phosphate reductoisomerase (Anaeromyxobacter dehalogenans (strain 2CP-1 / ATCC BAA-258)).